We begin with the raw amino-acid sequence, 106 residues long: UPF0060 membrane protein Smed_0659 (106 aa).

The next 3 membrane-spanning stretches (helical) occupy residues Phe4 to Trp24, Gly31 to Val51, and Ala61 to Ala81.

The protein belongs to the UPF0060 family.

It localises to the cell inner membrane. This is UPF0060 membrane protein Smed_0659 from Sinorhizobium medicae (strain WSM419) (Ensifer medicae).